The chain runs to 364 residues: Protein FAM81A (364 aa).

3 coiled-coil regions span residues 75 to 107, 158 to 189, and 261 to 287; these read FLEEHIRNITAIVKQLNRDIEVLQEQIRARDNI, NKEQQAAKLILETKIKDAEGQISQLLSRVDLS, and ANERDVEKKLSQMSARLDKIEESQKRN. The disordered stretch occupies residues 281–300; it reads EESQKRNAEGQRKPDEEKVH.

This sequence belongs to the FAM81 family. As to quaternary structure, interacts with DLG4/PSD-95, GRIN2B/GLUN2B and SYNGAP1; the interactions facilitate condensate formation. Expressed in most regions of the brain (at protein level).

Its subcellular location is the postsynaptic density. The protein localises to the cytoplasm. Facilitates the interaction and assembly of proteins within the postsynaptic density by promoting the condensation of postsynaptic proteins via liquid-liquid phase separation. Required for neuronal activity. Accumulation at the postsynaptic density results in enlargement of dendritic spines. This is Protein FAM81A (Fam81a) from Mus musculus (Mouse).